We begin with the raw amino-acid sequence, 759 residues long: Phosphoribosylformylglycinamidine synthase subunit PurL (759 aa).

Residue His-34 is part of the active site. Residue Tyr-37 participates in ATP binding. Glu-95 contributes to the Mg(2+) binding site. Substrate contacts are provided by residues 96–99 (SHNH) and Arg-118. The Proton acceptor role is filled by His-97. Residue Asp-119 participates in Mg(2+) binding. Gln-243 is a substrate binding site. Asp-271 is a Mg(2+) binding site. Residue 315–317 (ESQ) coordinates substrate. The tract at residues 388-422 (DGAPMNDLASESPTQPDRDLPDPEPSLDEAVESVV) is disordered. Positions 520 and 557 each coordinate ATP. Mg(2+) is bound at residue Asn-558. Ser-560 contributes to the substrate binding site.

The protein belongs to the FGAMS family. As to quaternary structure, monomer. Part of the FGAM synthase complex composed of 1 PurL, 1 PurQ and 2 PurS subunits.

It localises to the cytoplasm. The enzyme catalyses N(2)-formyl-N(1)-(5-phospho-beta-D-ribosyl)glycinamide + L-glutamine + ATP + H2O = 2-formamido-N(1)-(5-O-phospho-beta-D-ribosyl)acetamidine + L-glutamate + ADP + phosphate + H(+). It participates in purine metabolism; IMP biosynthesis via de novo pathway; 5-amino-1-(5-phospho-D-ribosyl)imidazole from N(2)-formyl-N(1)-(5-phospho-D-ribosyl)glycinamide: step 1/2. In terms of biological role, part of the phosphoribosylformylglycinamidine synthase complex involved in the purines biosynthetic pathway. Catalyzes the ATP-dependent conversion of formylglycinamide ribonucleotide (FGAR) and glutamine to yield formylglycinamidine ribonucleotide (FGAM) and glutamate. The FGAM synthase complex is composed of three subunits. PurQ produces an ammonia molecule by converting glutamine to glutamate. PurL transfers the ammonia molecule to FGAR to form FGAM in an ATP-dependent manner. PurS interacts with PurQ and PurL and is thought to assist in the transfer of the ammonia molecule from PurQ to PurL. The polypeptide is Phosphoribosylformylglycinamidine synthase subunit PurL (Halorubrum lacusprofundi (strain ATCC 49239 / DSM 5036 / JCM 8891 / ACAM 34)).